The chain runs to 570 residues: Periplasmic trehalase (570 aa).

An N-terminal signal peptide occupies residues 1-34; that stretch reads MIPPEIRRSVLLQKAIKLALAGTLLTFASFSATA. Substrate-binding positions include R159, 166–167, N203, 212–214, 284–286, and G317; these read WD, HSQ, and RPE. Catalysis depends on proton donor/acceptor residues D319 and E503. E518 contributes to the substrate binding site. The disordered stretch occupies residues 544–570; that stretch reads KPCDSVPSTRPASLSATPTKTPSAATQ. A compositionally biased stretch (low complexity) spans 554–570; sequence PASLSATPTKTPSAATQ.

This sequence belongs to the glycosyl hydrolase 37 family. As to quaternary structure, monomer.

The protein resides in the periplasm. The enzyme catalyses alpha,alpha-trehalose + H2O = alpha-D-glucose + beta-D-glucose. In terms of biological role, provides the cells with the ability to utilize trehalose at high osmolarity by splitting it into glucose molecules that can subsequently be taken up by the phosphotransferase-mediated uptake system. The protein is Periplasmic trehalase of Salmonella paratyphi C (strain RKS4594).